Reading from the N-terminus, the 105-residue chain is Cell division protein FtsB (105 aa).

Residues Met1 to Leu3 lie on the Cytoplasmic side of the membrane. A helical transmembrane segment spans residues Phe4–Phe21. The Periplasmic portion of the chain corresponds to Gly22–Asp105. Positions Glu28–Asp74 form a coiled coil.

Belongs to the FtsB family. In terms of assembly, part of a complex composed of FtsB, FtsL and FtsQ.

The protein localises to the cell inner membrane. Its function is as follows. Essential cell division protein. May link together the upstream cell division proteins, which are predominantly cytoplasmic, with the downstream cell division proteins, which are predominantly periplasmic. This is Cell division protein FtsB from Tolumonas auensis (strain DSM 9187 / NBRC 110442 / TA 4).